Reading from the N-terminus, the 42-residue chain is Photosystem I reaction center subunit IX (42 aa).

A helical membrane pass occupies residues Tyr7–Ile27.

The protein belongs to the PsaJ family.

It is found in the plastid. Its subcellular location is the chloroplast thylakoid membrane. In terms of biological role, may help in the organization of the PsaE and PsaF subunits. The polypeptide is Photosystem I reaction center subunit IX (Psilotum nudum (Whisk fern)).